Reading from the N-terminus, the 217-residue chain is Coiled-coil domain-containing protein 124-B (217 aa).

The tract at residues 1–123 (MPKKFQSENT…EKPKTHLEIP (123 aa)) is disordered. Basic and acidic residues-rich tracts occupy residues 18–45 (RKAE…DDKH), 52–74 (RKEE…QRLL), and 98–123 (QIEE…LEIP). Residues 41-83 (DDDKHVVRKEHRKEEKEKKRLELLERKKESQRLLDEEDSKMKG) are a coiled coil.

Belongs to the CCDC124 family. Associates with translationally inactive ribosomes in the nonrotated state.

It is found in the cytoplasm. It localises to the cytoskeleton. Its subcellular location is the microtubule organizing center. The protein localises to the centrosome. The protein resides in the midbody. Its function is as follows. Ribosome-binding protein involved in ribosome hibernation: associates with translationally inactive ribosomes and stabilizes the nonrotated conformation of the 80S ribosome, thereby promoting ribosome preservation and storage. This is Coiled-coil domain-containing protein 124-B (ccdc124-b) from Xenopus laevis (African clawed frog).